Reading from the N-terminus, the 85-residue chain is MKSEIHPDYHYVIFNDLASGEKILTRTTANSDKTAEWTDGNTYPVIDVEISAASHPFYTGKQRIMDTAGRVERFNARFKGFGGKK.

The protein belongs to the bacterial ribosomal protein bL31 family. Type B subfamily. In terms of assembly, part of the 50S ribosomal subunit.

This Micrococcus luteus (strain ATCC 4698 / DSM 20030 / JCM 1464 / CCM 169 / CCUG 5858 / IAM 1056 / NBRC 3333 / NCIMB 9278 / NCTC 2665 / VKM Ac-2230) (Micrococcus lysodeikticus) protein is Large ribosomal subunit protein bL31B.